Consider the following 146-residue polypeptide: Hemoglobin subunit beta (146 aa).

One can recognise a Globin domain in the interval 2–146 (HWSAEEKQLI…VAHALARKYH (145 aa)). Heme b-binding residues include histidine 63 and histidine 92.

The protein belongs to the globin family. As to quaternary structure, heterotetramer of two alpha chains and two beta chains. As to expression, red blood cells.

Involved in oxygen transport from the lung to the various peripheral tissues. The protein is Hemoglobin subunit beta (HBB) of Anser indicus (Bar-headed goose).